A 503-amino-acid polypeptide reads, in one-letter code: Lysine--tRNA ligase (503 aa).

Glu-413 and Glu-420 together coordinate Mg(2+).

Belongs to the class-II aminoacyl-tRNA synthetase family. Homodimer. It depends on Mg(2+) as a cofactor.

It localises to the cytoplasm. The catalysed reaction is tRNA(Lys) + L-lysine + ATP = L-lysyl-tRNA(Lys) + AMP + diphosphate. In Actinobacillus succinogenes (strain ATCC 55618 / DSM 22257 / CCUG 43843 / 130Z), this protein is Lysine--tRNA ligase.